The sequence spans 268 residues: MRKKTYAMRYVAGQPAERIFPPEALLHVGAELEPCVPLIHGSRLKVLVWNIFKQQRAEWLSVLQNFGKDAHLVLLQEAQTTPELVRFATTHYLVADQVPAYVLPQHPSGVMTLASAHAVYCCPLREREPLLRLSKSALVTAYPLPNEQVLMVVNIHAVNFSLGIDVYSKQLGPIGEQIIHHKGPVIIAGDFNAWSRQRINALYRFAREMGLREVRFTDDHRRKAFGRPLDFIFYRGMGVAEASVLVTRASDHNPLLVEFDVHTSKSLS.

This sequence belongs to the UPF0294 family.

The protein resides in the cytoplasm. The chain is UPF0294 protein ETA_26410 from Erwinia tasmaniensis (strain DSM 17950 / CFBP 7177 / CIP 109463 / NCPPB 4357 / Et1/99).